A 158-amino-acid chain; its full sequence is ATP synthase subunit b', chloroplastic (158 aa).

The helical transmembrane segment at glycine 21–phenylalanine 41 threads the bilayer.

This sequence belongs to the ATPase B chain family. F-type ATPases have 2 components, F(1) - the catalytic core - and F(0) - the membrane proton channel. F(1) has five subunits: alpha(3), beta(3), gamma(1), delta(1), epsilon(1). F(0) has four main subunits: a(1), b(1), b'(1) and c(10-14). The alpha and beta chains form an alternating ring which encloses part of the gamma chain. F(1) is attached to F(0) by a central stalk formed by the gamma and epsilon chains, while a peripheral stalk is formed by the delta, b and b' chains.

Its subcellular location is the plastid. It is found in the chloroplast thylakoid membrane. In terms of biological role, f(1)F(0) ATP synthase produces ATP from ADP in the presence of a proton or sodium gradient. F-type ATPases consist of two structural domains, F(1) containing the extramembraneous catalytic core and F(0) containing the membrane proton channel, linked together by a central stalk and a peripheral stalk. During catalysis, ATP synthesis in the catalytic domain of F(1) is coupled via a rotary mechanism of the central stalk subunits to proton translocation. Its function is as follows. Component of the F(0) channel, it forms part of the peripheral stalk, linking F(1) to F(0). The b'-subunit is a diverged and duplicated form of b found in plants and photosynthetic bacteria. The protein is ATP synthase subunit b', chloroplastic of Porphyra purpurea (Red seaweed).